The chain runs to 399 residues: Chorismate synthase (399 aa).

Positions 40 and 46 each coordinate NADP(+). FMN-binding positions include 129–131, 257–258, Gly302, 317–321, and Arg343; these read RSS, QA, and KPISS.

Belongs to the chorismate synthase family. Homotetramer. Requires FMNH2 as cofactor.

It catalyses the reaction 5-O-(1-carboxyvinyl)-3-phosphoshikimate = chorismate + phosphate. It functions in the pathway metabolic intermediate biosynthesis; chorismate biosynthesis; chorismate from D-erythrose 4-phosphate and phosphoenolpyruvate: step 7/7. In terms of biological role, catalyzes the anti-1,4-elimination of the C-3 phosphate and the C-6 proR hydrogen from 5-enolpyruvylshikimate-3-phosphate (EPSP) to yield chorismate, which is the branch point compound that serves as the starting substrate for the three terminal pathways of aromatic amino acid biosynthesis. This reaction introduces a second double bond into the aromatic ring system. This is Chorismate synthase from Chlorobium chlorochromatii (strain CaD3).